A 511-amino-acid polypeptide reads, in one-letter code: IWS1-like protein (511 aa).

The segment at 1–200 is disordered; it reads MSDHEEESHG…DDGPVDRHGR (200 aa). Composition is skewed to low complexity over residues 11 to 30 and 55 to 86; these read ASPTSPASSGASSPLAPISP and APASPARDSSAPASPSAASPAGSRSPSPSPVK. The segment covering 94–103 has biased composition (acidic residues); the sequence is DSDEDSDAEE. Residues 134–143 show a composition bias toward basic and acidic residues; it reads HEGTSKKEPT. A compositionally biased stretch (acidic residues) spans 166–179; that stretch reads LDEFVEGRDEEESQ. A TFIIS N-terminal domain is found at 294 to 374; the sequence is SALSEWLAPL…GEWARPIYHL (81 aa). The disordered stretch occupies residues 382–454; sequence SRQEREERDY…RARVPKPSTK (73 aa). 2 stretches are compositionally biased toward basic and acidic residues: residues 383–395 and 414–425; these read RQEREERDYSRMP and DQPKRPRIRDAD.

The protein belongs to the IWS1 family.

It localises to the nucleus. The chain is IWS1-like protein from Caenorhabditis elegans.